Reading from the N-terminus, the 148-residue chain is Putative adenylate kinase (148 aa).

Residues G9, G11, K12, S13, and T14 each contribute to the ATP site. The tract at residues 28–44 (EGNALAVKYGCLSGDEV) is NMP. Positions 91–101 (DRGYSPEKIDE) are LID. Residue R92 participates in ATP binding.

Belongs to the adenylate kinase family. AK6 subfamily. In terms of assembly, interacts with uS11. Not a structural component of 40S pre-ribosomes, but transiently interacts with them by binding to uS11.

It catalyses the reaction AMP + ATP = 2 ADP. The enzyme catalyses ATP + H2O = ADP + phosphate + H(+). In terms of biological role, broad-specificity nucleoside monophosphate (NMP) kinase that catalyzes the reversible transfer of the terminal phosphate group between nucleoside triphosphates and monophosphates. Also has ATPase activity. Involved in the late maturation steps of the 30S ribosomal particles, specifically 16S rRNA maturation. While NMP activity is not required for ribosome maturation, ATPase activity is. Associates transiently with small ribosomal subunit protein uS11. ATP hydrolysis breaks the interaction with uS11. May temporarily remove uS11 from the ribosome to enable a conformational change of the ribosomal RNA that is needed for the final maturation step of the small ribosomal subunit. This chain is Putative adenylate kinase, found in Thermoplasma acidophilum (strain ATCC 25905 / DSM 1728 / JCM 9062 / NBRC 15155 / AMRC-C165).